A 701-amino-acid chain; its full sequence is Pentatricopeptide repeat-containing protein At5g50390, chloroplastic (701 aa).

Residues 1-47 (MEIPLSRYQSIRLDEIRDSSSNPKVLTFPRKFSLRGRRWKNPFGRLS) constitute a chloroplast transit peptide. PPR repeat units lie at residues 86-116 (SGVTICSQIEKLVLCNRFREAFELFEILEIR), 122-156 (GVSTYDALVEACIRLKSIRCVKRVYGFMMSNGFEP), 157-187 (EQYMMNRILLMHVKCGMIIDARRLFDEIPER), 188-218 (NLYSYYSIISGFVNFGNYVEAFELFKMMWEE), 223-257 (ETHTFAVMLRASAGLGSIYVGKQLHVCALKLGVVD), 258-288 (NTFVSCGLIDMYSKCGDIEDARCAFECMPEK), 289-323 (TTVAWNNVIAGYALHGYSEEALCLLYDMRDSGVSI), 324-358 (DQFTLSIMIRISTKLAKLELTKQAHASLIRNGFES), 359-389 (EIVANTALVDFYSKWGRVDTARYVFDKLPRK), 390-424 (NIISWNALMGGYANHGRGTDAVKLFEKMIAANVAP), 425-460 (NHVTFLAVLSACAYSGLSEQGWEIFLSMSEVHGIKP), and 461-491 (RAMHYACMIELLGRDGLLDEAIAFIRRAPLK). The type E motif stretch occupies residues 496 to 571 (MWAALLNACR…MPACTWVEVG (76 aa)). Residues 572-606 (DQTHSFLSGDRFDSYNETVKRQIYQKVDELMEEIS) form a type E(+) motif; degenerate region. The type DYW motif stretch occupies residues 607–701 (EYGYSEEEQH…EGKCSCGGYW (95 aa)).

This sequence belongs to the PPR family. PCMP-H subfamily.

Its subcellular location is the plastid. The protein localises to the chloroplast. In Arabidopsis thaliana (Mouse-ear cress), this protein is Pentatricopeptide repeat-containing protein At5g50390, chloroplastic (PCMP-H58).